The chain runs to 30 residues: Brevinin-2Rj (30 aa).

Cysteine 24 and cysteine 30 are oxidised to a cystine.

Expressed by the skin glands.

It is found in the secreted. Antimicrobial peptide. This is Brevinin-2Rj from Pelophylax ridibundus (Marsh frog).